A 266-amino-acid polypeptide reads, in one-letter code: Small ribosomal subunit protein uS2 (266 aa).

Residues 247–266 form a disordered region; sequence EGENNYSNNRSWNKPERTNN. The span at 249–258 shows a compositional bias: polar residues; it reads ENNYSNNRSW.

It belongs to the universal ribosomal protein uS2 family.

The polypeptide is Small ribosomal subunit protein uS2 (Mesoplasma florum (strain ATCC 33453 / NBRC 100688 / NCTC 11704 / L1) (Acholeplasma florum)).